A 396-amino-acid chain; its full sequence is KiSS-1 receptor (396 aa).

Residues 1–46 (MAAEATLGPNVSWWAPSNASGCPGCGVNASDGPGSAPRPLDAWLVP) are Extracellular-facing. Asparagine 10, asparagine 18, and asparagine 28 each carry an N-linked (GlcNAc...) asparagine glycan. A helical transmembrane segment spans residues 47 to 67 (LFFAALMLLGLVGNSLVIFVI). The Cytoplasmic segment spans residues 68 to 90 (CRHKHMQTVTNFYIANLAATDVT). A helical transmembrane segment spans residues 91–111 (FLLCCVPFTALLYPLPTWVLG). Over 112-120 (DFMCKFVNY) the chain is Extracellular. Cysteines 115 and 191 form a disulfide. The chain crosses the membrane as a helical span at residues 121 to 138 (IQQVSVQATCATLTAMSV). The Cytoplasmic segment spans residues 139 to 159 (DRWYVTVFPLRALHRRTPRLA). A helical transmembrane segment spans residues 160 to 180 (LTVSLSIWVGSAAVSAPVLAL). Residues 181 to 202 (HRLSPGPHTYCSEAFPSRALER) lie on the Extracellular side of the membrane. A helical transmembrane segment spans residues 203-223 (AFALYNLLALYLLPLLATCAC). Residues 224–264 (YGAMLRHLGRAAVRPAPTDGALQGQLLAQRAGAVRTKVSRL) are Cytoplasmic-facing. The helical transmembrane segment at 265–285 (VAAVVLLFAACWGPIQLFLVL) threads the bilayer. Residues 286–305 (QALGPSGAWHPRSYAAYALK) are Extracellular-facing. Residues 306–326 (IWAHCMSYSNSALNPLLYAFL) traverse the membrane as a helical segment. Topologically, residues 327–396 (GSHFRQAFCR…SVQDEHTAPL (70 aa)) are cytoplasmic. The disordered stretch occupies residues 346 to 396 (RRPHASAHSDRAAPHSVPHSRAAHPVRVRTPEPGNPVRRSPSVQDEHTAPL).

The protein belongs to the G-protein coupled receptor 1 family. In terms of tissue distribution, highest expression levels in the cerebrum and cecum. Moderate expression in the ovary, colon and placenta. Low levels in the uterus, small intestine, and thymus. Expressed only moderately in the placenta. No expression in kidney tissues. Has a complex and abundant central nervous system expression pattern. Expressed in brain regions such as pons, midbrain, thalamus, hypothalamus, hippocampus, amygdala, cortex, frontal cortex, and striatum. No expression in the cerebellum. Persistent expression is detected in hypothalamus throughout postnatal development, with maximum expression levels at puberty in both male and female. Hypothalamic expression changed throughout the estrus cycle and is significantly increased after gonadectomy, a rise that is prevented by sex steroid replacement both in males and females.

The protein localises to the cell membrane. Its function is as follows. Receptor for metastin, a C-terminally amidated peptide of KiSS1. KiSS1 is a metastasis suppressor protein. Activation of the receptor inhibits cell proliferation and cell migration, key characteristics of tumor metastasis. The receptor is essential for normal gonadotropin-released hormone physiology and for puberty. The hypothalamic KiSS1/KISS1R system is a pivotal factor in central regulation of the gonadotropic axis at puberty and in adulthood. Analysis of the transduction pathways activated by the receptor identifies coupling to phospholipase C and intracellular calcium release through pertussis toxin-insensitive G(q) proteins. The sequence is that of KiSS-1 receptor (Kiss1r) from Rattus norvegicus (Rat).